The chain runs to 314 residues: tRNA-cytidine(32) 2-sulfurtransferase (314 aa).

The PP-loop motif signature appears at 49–54 (SGGKDS). Positions 124, 127, and 215 each coordinate [4Fe-4S] cluster.

This sequence belongs to the TtcA family. In terms of assembly, homodimer. Mg(2+) is required as a cofactor. It depends on [4Fe-4S] cluster as a cofactor.

It is found in the cytoplasm. It catalyses the reaction cytidine(32) in tRNA + S-sulfanyl-L-cysteinyl-[cysteine desulfurase] + AH2 + ATP = 2-thiocytidine(32) in tRNA + L-cysteinyl-[cysteine desulfurase] + A + AMP + diphosphate + H(+). Its pathway is tRNA modification. Its function is as follows. Catalyzes the ATP-dependent 2-thiolation of cytidine in position 32 of tRNA, to form 2-thiocytidine (s(2)C32). The sulfur atoms are provided by the cysteine/cysteine desulfurase (IscS) system. The polypeptide is tRNA-cytidine(32) 2-sulfurtransferase (Histophilus somni (strain 2336) (Haemophilus somnus)).